We begin with the raw amino-acid sequence, 235 residues long: Leucyl/phenylalanyl-tRNA--protein transferase (235 aa).

Belongs to the L/F-transferase family.

The protein localises to the cytoplasm. The enzyme catalyses N-terminal L-lysyl-[protein] + L-leucyl-tRNA(Leu) = N-terminal L-leucyl-L-lysyl-[protein] + tRNA(Leu) + H(+). It catalyses the reaction N-terminal L-arginyl-[protein] + L-leucyl-tRNA(Leu) = N-terminal L-leucyl-L-arginyl-[protein] + tRNA(Leu) + H(+). The catalysed reaction is L-phenylalanyl-tRNA(Phe) + an N-terminal L-alpha-aminoacyl-[protein] = an N-terminal L-phenylalanyl-L-alpha-aminoacyl-[protein] + tRNA(Phe). Its function is as follows. Functions in the N-end rule pathway of protein degradation where it conjugates Leu, Phe and, less efficiently, Met from aminoacyl-tRNAs to the N-termini of proteins containing an N-terminal arginine or lysine. The protein is Leucyl/phenylalanyl-tRNA--protein transferase of Aeromonas hydrophila subsp. hydrophila (strain ATCC 7966 / DSM 30187 / BCRC 13018 / CCUG 14551 / JCM 1027 / KCTC 2358 / NCIMB 9240 / NCTC 8049).